Here is a 1530-residue protein sequence, read N- to C-terminus: Synaptonemal complex protein 2 (1530 aa).

A compositionally biased stretch (basic and acidic residues) spans 439–461 (EKSKSPKEFAKPSKYIKNSDKGN). Residues 439-480 (EKSKSPKEFAKPSKYIKNSDKGNRNNSQLEKTTPSKRKMSEA) are disordered. 2 positions are modified to phosphoserine: Ser-457 and Ser-465. Phosphothreonine is present on Thr-471. Residues Ser-494, Ser-519, Ser-529, and Ser-538 each carry the phosphoserine modification. The segment at 496–555 (VLFSNTSIPPRRRRIKPPLQMTSSAEKPSVSQTSENRVDNAASLKSRSSEGRHRRDNIDK) is disordered. Residues 515-530 (QMTSSAEKPSVSQTSE) show a composition bias toward polar residues. Over residues 542 to 555 (RSSEGRHRRDNIDK) the composition is skewed to basic and acidic residues. Thr-619 is subject to Phosphothreonine. 3 disordered regions span residues 653–676 (QKSSSSISDHNSEGTGKVKYKKEQ), 693–717 (HNQQQNHPKYSGQKNTENAKQSDWP), and 755–795 (DKNP…SKGK). Residues Ser-660 and Ser-664 each carry the phosphoserine modification. Composition is skewed to polar residues over residues 695 to 713 (QQQNHPKYSGQKNTENAKQ) and 755 to 764 (DKNPSASKNV). A Phosphoserine modification is found at Ser-936. At Thr-938 the chain carries Phosphothreonine. Positions 962–1003 (QLIDYSRNKNVKNHKSGKSRSSLEKGQPSSKMTPSKNITKKM) are disordered. The segment covering 970–979 (KNVKNHKSGK) has biased composition (basic residues). Residues 988-998 (QPSSKMTPSKN) show a composition bias toward polar residues. Phosphoserine is present on residues Ser-1136, Ser-1138, Ser-1145, Ser-1161, and Ser-1177. Residue Thr-1189 is modified to Phosphothreonine. Phosphoserine is present on residues Ser-1204, Ser-1234, Ser-1253, Ser-1295, and Ser-1297. Thr-1339 bears the Phosphothreonine mark.

It belongs to the SYCP2 family. As to quaternary structure, component of the lateral elements of synaptonemal complexes. Heterodimer with SYCP3. Interacts with SMC1A and SMC3. Interacts with TEX11. In terms of processing, phosphorylated.

It localises to the nucleus. It is found in the chromosome. Functionally, major component of the axial/lateral elements of synaptonemal complexes (SCS) during meiotic prophase. Plays a role in the assembly of synaptonemal complexes. Required for normal meiotic chromosome synapsis during oocyte and spermatocyte development and for normal male and female fertility. Required for insertion of SYCP3 into synaptonemal complexes. May be involved in the organization of chromatin by temporarily binding to DNA scaffold attachment regions. Requires SYCP3, but not SYCP1, in order to be incorporated into the axial/lateral elements. The protein is Synaptonemal complex protein 2 (SYCP2) of Homo sapiens (Human).